We begin with the raw amino-acid sequence, 405 residues long: Prostaglandin E2 receptor EP1 subtype (405 aa).

The Extracellular segment spans residues 1-39 (MSPYGLNLSLVDEATTCVTPRVPNTSVVLPTGGNGTSPA). 3 N-linked (GlcNAc...) asparagine glycosylation sites follow: asparagine 7, asparagine 24, and asparagine 34. Residues 40–62 (LPIFSMTLGAVSNVLALALLAQV) form a helical membrane-spanning segment. Topologically, residues 63-80 (AGRLRRRRSTATFLLFVA) are cytoplasmic. Residues 81-99 (SLLAIDLAGHVIPGALVLR) form a helical membrane-spanning segment. The Extracellular portion of the chain corresponds to 100 to 113 (LYTAGRAPAGGACH). A disulfide bond links cysteine 112 and cysteine 190. Residues 114–135 (FLGGCMVFFGLCPLLLGCGMAV) traverse the membrane as a helical segment. At 136–157 (ERCVGVTQPLIHAARVSVARAR) the chain is on the cytoplasmic side. Residues 158 to 179 (LALALLAAMALAVALLPLVHVG) form a helical membrane-spanning segment. The Extracellular segment spans residues 180–202 (HYELQYPGTWCFISLGPPGGWRQ). Residues 203–228 (ALLAGLFAGLGLAALLAALVCNTLSG) form a helical membrane-spanning segment. At 229 to 301 (LALLRARWRR…HAHDVEMVGQ (73 aa)) the chain is on the cytoplasmic side. A helical transmembrane segment spans residues 302 to 323 (LVGIMVVSCICWSPLLVLVVLA). At 324-337 (IGGWNSNSLQRPLF) the chain is on the extracellular side. The helical transmembrane segment at 338–357 (LAVRLASWNQILDPWVYILL) threads the bilayer. Residues 358 to 405 (RQAMLRQLLRLLPLRVSAKGGPTELSLTKSAWEASSLRSSRHSGFSHL) lie on the Cytoplasmic side of the membrane.

It belongs to the G-protein coupled receptor 1 family. Post-translationally, phosphorylated. As to expression, highly abundant in kidney and lung. Found in a lesser extent in spleen, colon, and thymus. Also expressed in uterine myometrium and endometrium.

The protein resides in the cell membrane. Functionally, receptor for prostaglandin E2 (PGE2). The activity of this receptor is mediated by G(q) proteins which activate a phosphatidylinositol-calcium second messenger system. May play a role as an important modulator of renal function. Implicated the smooth muscle contractile response to PGE2 in various tissues. Isoform 1 and isoform 2 have identical ligand binding properties, but isoform 2 lacks coupling to calcium mobilization and may therefore attenuate the action of PGE2 on tissues. This is Prostaglandin E2 receptor EP1 subtype (Ptger1) from Rattus norvegicus (Rat).